The sequence spans 205 residues: Large ribosomal subunit protein bL25 (205 aa).

Belongs to the bacterial ribosomal protein bL25 family. CTC subfamily. As to quaternary structure, part of the 50S ribosomal subunit; part of the 5S rRNA/L5/L18/L25 subcomplex. Contacts the 5S rRNA. Binds to the 5S rRNA independently of L5 and L18.

In terms of biological role, this is one of the proteins that binds to the 5S RNA in the ribosome where it forms part of the central protuberance. The protein is Large ribosomal subunit protein bL25 of Bartonella bacilliformis (strain ATCC 35685 / KC583 / Herrer 020/F12,63).